We begin with the raw amino-acid sequence, 380 residues long: Cytochrome b (380 aa).

The next 4 membrane-spanning stretches (helical) occupy residues 34 to 54 (FGSLLGICLLTQILTGLLLAT), 78 to 99 (WLIRNLHANGASFFFICIYLHI), 114 to 134 (WNTGVILLLALMATAFVGYVL), and 179 to 199 (FFALHFLLPFMIAGLAFIHLT). H84 and H98 together coordinate heme b. The heme b site is built by H183 and H197. An a ubiquinone-binding site is contributed by H202. Helical transmembrane passes span 227-247 (LKDILGFIIMFLPLTTLALFS), 289-309 (LGGVLALAASVLVLFLTPLLH), 321-341 (LSQLLFWTLVANLLILTWVGS), and 348-368 (FIIIGQLASLAYFTILLLLFP).

This sequence belongs to the cytochrome b family. As to quaternary structure, the cytochrome bc1 complex contains 11 subunits: 3 respiratory subunits (MT-CYB, CYC1 and UQCRFS1), 2 core proteins (UQCRC1 and UQCRC2) and 6 low-molecular weight proteins (UQCRH/QCR6, UQCRB/QCR7, UQCRQ/QCR8, UQCR10/QCR9, UQCR11/QCR10 and a cleavage product of UQCRFS1). This cytochrome bc1 complex then forms a dimer. Requires heme b as cofactor.

The protein resides in the mitochondrion inner membrane. Functionally, component of the ubiquinol-cytochrome c reductase complex (complex III or cytochrome b-c1 complex) that is part of the mitochondrial respiratory chain. The b-c1 complex mediates electron transfer from ubiquinol to cytochrome c. Contributes to the generation of a proton gradient across the mitochondrial membrane that is then used for ATP synthesis. The sequence is that of Cytochrome b (MT-CYB) from Uria lomvia (Thick-billed murre).